The following is a 192-amino-acid chain: Holliday junction branch migration complex subunit RuvA (192 aa).

Positions 1 to 64 (MLGRLTGLLA…EDAQVLFGFL (64 aa)) are domain I. Residues 65–139 (TAPERETFRM…GKLGADLGPA (75 aa)) form a domain II region. The segment at 139 to 143 (AIGGK) is flexible linker. Positions 144–192 (PASDAQADILQALIALGYSEREAQAAVKALPAEVGVSDGIKLALKALAR) are domain III.

The protein belongs to the RuvA family. In terms of assembly, homotetramer. Forms an RuvA(8)-RuvB(12)-Holliday junction (HJ) complex. HJ DNA is sandwiched between 2 RuvA tetramers; dsDNA enters through RuvA and exits via RuvB. An RuvB hexamer assembles on each DNA strand where it exits the tetramer. Each RuvB hexamer is contacted by two RuvA subunits (via domain III) on 2 adjacent RuvB subunits; this complex drives branch migration. In the full resolvosome a probable DNA-RuvA(4)-RuvB(12)-RuvC(2) complex forms which resolves the HJ.

It localises to the cytoplasm. In terms of biological role, the RuvA-RuvB-RuvC complex processes Holliday junction (HJ) DNA during genetic recombination and DNA repair, while the RuvA-RuvB complex plays an important role in the rescue of blocked DNA replication forks via replication fork reversal (RFR). RuvA specifically binds to HJ cruciform DNA, conferring on it an open structure. The RuvB hexamer acts as an ATP-dependent pump, pulling dsDNA into and through the RuvAB complex. HJ branch migration allows RuvC to scan DNA until it finds its consensus sequence, where it cleaves and resolves the cruciform DNA. In Methylibium petroleiphilum (strain ATCC BAA-1232 / LMG 22953 / PM1), this protein is Holliday junction branch migration complex subunit RuvA.